A 47-amino-acid chain; its full sequence is ATP-dependent zinc metalloprotease FTSH, chloroplastic (47 aa).

It in the N-terminal section; belongs to the AAA ATPase family. The protein in the C-terminal section; belongs to the peptidase M41 family. Requires Zn(2+) as cofactor.

Its subcellular location is the plastid. It localises to the chloroplast membrane. Its function is as follows. Seems to act as an ATP-dependent zinc metallopeptidase. This is ATP-dependent zinc metalloprotease FTSH, chloroplastic from Populus euphratica (Euphrates poplar).